We begin with the raw amino-acid sequence, 293 residues long: Elongation factor Ts (293 aa).

The involved in Mg(2+) ion dislocation from EF-Tu stretch occupies residues 80–83 (TDFV).

It belongs to the EF-Ts family.

The protein localises to the cytoplasm. In terms of biological role, associates with the EF-Tu.GDP complex and induces the exchange of GDP to GTP. It remains bound to the aminoacyl-tRNA.EF-Tu.GTP complex up to the GTP hydrolysis stage on the ribosome. In Burkholderia thailandensis (strain ATCC 700388 / DSM 13276 / CCUG 48851 / CIP 106301 / E264), this protein is Elongation factor Ts.